The primary structure comprises 269 residues: MPELPEVETSRRGIEPHLVGATILHAVVRNGRLRWPVSEEIYRLSDQPVLSVQRRAKYLLLELPEGWIIIHLGMSGSLRILTEGLPPEKHDHVDLVMSNGKVLRYTDPRRFGAWLWAKELEGHNVLAHLGPEPLSDDFNGEYLHQKCAKKKTAIKPWLMDNKLVVGVGNIYASESLFAAGIHPDRLASSLSLAECELLARVIKAVLLRSIEQGGTTLKDFLQSDGKPGYFAQELQVYGRKGEPCRVCGTPIVATKHAQRATFYCRQCQK.

Pro2 acts as the Schiff-base intermediate with DNA in catalysis. Glu3 serves as the catalytic Proton donor. Catalysis depends on Lys57, which acts as the Proton donor; for beta-elimination activity. The DNA site is built by His90, Arg109, and Lys150. An FPG-type zinc finger spans residues 235–269 (QVYGRKGEPCRVCGTPIVATKHAQRATFYCRQCQK). Arg259 (proton donor; for delta-elimination activity) is an active-site residue.

Belongs to the FPG family. Monomer. Requires Zn(2+) as cofactor.

The enzyme catalyses Hydrolysis of DNA containing ring-opened 7-methylguanine residues, releasing 2,6-diamino-4-hydroxy-5-(N-methyl)formamidopyrimidine.. It catalyses the reaction 2'-deoxyribonucleotide-(2'-deoxyribose 5'-phosphate)-2'-deoxyribonucleotide-DNA = a 3'-end 2'-deoxyribonucleotide-(2,3-dehydro-2,3-deoxyribose 5'-phosphate)-DNA + a 5'-end 5'-phospho-2'-deoxyribonucleoside-DNA + H(+). In terms of biological role, involved in base excision repair of DNA damaged by oxidation or by mutagenic agents. Acts as a DNA glycosylase that recognizes and removes damaged bases. Has a preference for oxidized purines, such as 7,8-dihydro-8-oxoguanine (8-oxoG). Has AP (apurinic/apyrimidinic) lyase activity and introduces nicks in the DNA strand. Cleaves the DNA backbone by beta-delta elimination to generate a single-strand break at the site of the removed base with both 3'- and 5'-phosphates. This chain is Formamidopyrimidine-DNA glycosylase, found in Shigella dysenteriae serotype 1 (strain Sd197).